The chain runs to 961 residues: SH3 domain-binding protein 4 (961 aa).

One can recognise an SH3 1 domain in the interval 55–114 (GNAKEVIAIKDYCPNNFTTLKFSKGDHLYVLDTSGGEWWYAHNTTEMGYIPSSYVQPLNY). Phosphoserine occurs at positions 131, 244, 249, 277, and 294. One can recognise a ZU5 domain in the interval 315 to 452 (TNIVCKLDSS…LEPCMYLAIV (138 aa)). At Ser-635 the chain carries Phosphoserine. The SH3 2 domain maps to 652 to 722 (SSLKFGKLLK…HTKNVLVVGK (71 aa)).

Homodimer or homooligomer. Interacts with DNM2, EPS15, clathrin, the adapter protein complex 2/AP-2 and TFRC. Interacts with the Rag GTPases RRAGA, RRAGB, RRAGC and RRAGD; the interaction is most probably direct, preferentially occurs with their inactive GDP-bound form and is negatively regulated by amino acids. In terms of processing, phosphorylated upon EGF stimulation. Phosphorylation prevents interaction with DNM2.

Its subcellular location is the membrane. It localises to the clathrin-coated pit. The protein resides in the cytoplasmic vesicle. It is found in the clathrin-coated vesicle. The protein localises to the nucleus. May function in transferrin receptor internalization at the plasma membrane through a cargo-specific control of clathrin-mediated endocytosis. Alternatively, may act as a negative regulator of the amino acid-induced TOR signaling by inhibiting the formation of active Rag GTPase complexes. Preferentially binds inactive Rag GTPase complexes and prevents their interaction with the mTORC1 complex inhibiting its relocalization to lysosomes and its activation. Thereby, may indirectly regulate cell growth, proliferation and autophagy. This Rattus norvegicus (Rat) protein is SH3 domain-binding protein 4 (Sh3bp4).